Consider the following 320-residue polypeptide: MRSAQVYRWQIPMDAGVVLRDRRLKTRDGLYVCLREGEREGWGEISPLPGFSQETWEEAQSVLLAWVNNWLAGDCELPQMPSVAFGVSCALAELADTLPQAANYRAAPLCNGDPDDLILKLADMPGEKVAKVKVGLYEAVRDGMVVNLLLEAIPDLHLRLDANRAWTPLKGQQFAKYVNPDYRHRIAFLEEPCKTRDDSRAFARETGIAIAWDESLREPDFAFVAEEGVRAVVIKPTLTGSLEKVREQVQAAHALRLTAVISSSIESSLGLTQLARIAAWLTPDTIPGLDTLDLMQAQQVRRWPGSTLPVVEVDALERLL.

Lys-133 functions as the Proton donor in the catalytic mechanism. Mg(2+) is bound by residues Asp-161, Glu-190, and Asp-213. The active-site Proton acceptor is the Lys-235.

This sequence belongs to the mandelate racemase/muconate lactonizing enzyme family. MenC type 1 subfamily. A divalent metal cation is required as a cofactor.

The catalysed reaction is (1R,6R)-6-hydroxy-2-succinyl-cyclohexa-2,4-diene-1-carboxylate = 2-succinylbenzoate + H2O. It participates in quinol/quinone metabolism; 1,4-dihydroxy-2-naphthoate biosynthesis; 1,4-dihydroxy-2-naphthoate from chorismate: step 4/7. It functions in the pathway quinol/quinone metabolism; menaquinone biosynthesis. Its function is as follows. Converts 2-succinyl-6-hydroxy-2,4-cyclohexadiene-1-carboxylate (SHCHC) to 2-succinylbenzoate (OSB). This is o-succinylbenzoate synthase from Shigella boydii serotype 18 (strain CDC 3083-94 / BS512).